The sequence spans 157 residues: 2-C-methyl-D-erythritol 2,4-cyclodiphosphate synthase (157 aa).

A divalent metal cation contacts are provided by aspartate 8 and histidine 10. 4-CDP-2-C-methyl-D-erythritol 2-phosphate-binding positions include 8 to 10 and 34 to 35; these read DVH and HS. Position 42 (histidine 42) interacts with a divalent metal cation. 4-CDP-2-C-methyl-D-erythritol 2-phosphate contacts are provided by residues 56–58, 61–65, 132–135, phenylalanine 139, and arginine 142; these read DIG, FPDNE, and TTTE.

The protein belongs to the IspF family. Homotrimer. Requires a divalent metal cation as cofactor.

The enzyme catalyses 4-CDP-2-C-methyl-D-erythritol 2-phosphate = 2-C-methyl-D-erythritol 2,4-cyclic diphosphate + CMP. The protein operates within isoprenoid biosynthesis; isopentenyl diphosphate biosynthesis via DXP pathway; isopentenyl diphosphate from 1-deoxy-D-xylulose 5-phosphate: step 4/6. Involved in the biosynthesis of isopentenyl diphosphate (IPP) and dimethylallyl diphosphate (DMAPP), two major building blocks of isoprenoid compounds. Catalyzes the conversion of 4-diphosphocytidyl-2-C-methyl-D-erythritol 2-phosphate (CDP-ME2P) to 2-C-methyl-D-erythritol 2,4-cyclodiphosphate (ME-CPP) with a corresponding release of cytidine 5-monophosphate (CMP). This chain is 2-C-methyl-D-erythritol 2,4-cyclodiphosphate synthase, found in Desulforamulus reducens (strain ATCC BAA-1160 / DSM 100696 / MI-1) (Desulfotomaculum reducens).